Here is a 29-residue protein sequence, read N- to C-terminus: Cytochrome b6-f complex subunit 8 (29 aa).

The helical transmembrane segment at 3–23 threads the bilayer; the sequence is IVSLAWAALMIVFTFSLSLVV.

It belongs to the PetN family. As to quaternary structure, the 4 large subunits of the cytochrome b6-f complex are cytochrome b6, subunit IV (17 kDa polypeptide, PetD), cytochrome f and the Rieske protein, while the 4 small subunits are PetG, PetL, PetM and PetN. The complex functions as a dimer.

It localises to the plastid membrane. Functionally, component of the cytochrome b6-f complex, which mediates electron transfer between photosystem II (PSII) and photosystem I (PSI), cyclic electron flow around PSI, and state transitions. This chain is Cytochrome b6-f complex subunit 8, found in Cuscuta exaltata (Tall dodder).